We begin with the raw amino-acid sequence, 413 residues long: Imidazolonepropionase (413 aa).

Residues H79 and H81 each contribute to the Fe(3+) site. Positions 79 and 81 each coordinate Zn(2+). Residues R88, Y151, and H184 each coordinate 4-imidazolone-5-propanoate. An N-formimidoyl-L-glutamate-binding site is contributed by Y151. H248 is a binding site for Fe(3+). H248 contributes to the Zn(2+) binding site. E251 contributes to the 4-imidazolone-5-propanoate binding site. D322 is a binding site for Fe(3+). D322 lines the Zn(2+) pocket. Residues N324 and G326 each coordinate N-formimidoyl-L-glutamate. S327 contacts 4-imidazolone-5-propanoate.

It belongs to the metallo-dependent hydrolases superfamily. HutI family. It depends on Zn(2+) as a cofactor. Fe(3+) is required as a cofactor.

Its subcellular location is the cytoplasm. It carries out the reaction 4-imidazolone-5-propanoate + H2O = N-formimidoyl-L-glutamate. It participates in amino-acid degradation; L-histidine degradation into L-glutamate; N-formimidoyl-L-glutamate from L-histidine: step 3/3. Functionally, catalyzes the hydrolytic cleavage of the carbon-nitrogen bond in imidazolone-5-propanoate to yield N-formimidoyl-L-glutamate. It is the third step in the universal histidine degradation pathway. In Fusobacterium nucleatum subsp. nucleatum (strain ATCC 25586 / DSM 15643 / BCRC 10681 / CIP 101130 / JCM 8532 / KCTC 2640 / LMG 13131 / VPI 4355), this protein is Imidazolonepropionase.